A 730-amino-acid chain; its full sequence is Guanyl-specific ribonuclease pgl-1 (730 aa).

The interval 205–447 (KQLMLDGPKS…VTRIVESLEK (243 aa)) is involved in dimerization. The active-site Proton acceptor is H437. Composition is skewed to polar residues over residues 452 to 472 (DTPS…QDSA) and 568 to 595 (DANQ…SPTK). Disordered stretches follow at residues 452 to 475 (DTPS…AYTK), 567 to 639 (SDAN…TPMP), and 686 to 730 (GGRG…RGGF). The RNA-binding RGG-box stretch occupies residues 674 to 730 (GGGRGGYGGGDRGGRGGYGGDRGGRGGYGGGDRGGRGGYGGDRGRGGYGGRGGRGGF).

Homodimer. Interacts with pgl-2 and pgl-3; this association is not required for P-granule localization of either pgl-2 or pgl-3. Interacts with ife-1. Interacts with prmt-1; the interaction is direct. Interacts with nmad-1. Interacts with P granule components meg-1, meg-3 and meg-4. The cofactor is Does not require metal ions for catalytic activity.. Post-translationally, methylated at arginine residues in the RNA-binding RGG-box by prmt-1. Methylation promotes P-granule degradation by autophagy. As to expression, expressed in the germline. Expressed in most somatic cells.

The protein resides in the cytoplasmic granule. The catalysed reaction is [RNA] containing guanosine + H2O = an [RNA fragment]-3'-guanosine-3'-phosphate + a 5'-hydroxy-ribonucleotide-3'-[RNA fragment].. With respect to regulation, not inhibited by RNase inhibitor RNasin. Functionally, guanyl-specific endoribonuclease which cleaves the phosphodiester bond in single-stranded RNA between the 3'-guanylic residue and the 5'-OH residue of adjacent nucleotide, resulting in the formation of a corresponding 2',3'-cyclic phosphate intermediate. Together with the P-granule component pgl-3, is involved in the formation of P-granules. Together with pgl-3, probably recruits other granule components such as pos-1, mex-3 and glh-1 to P-granules. In addition, may act redundantly with pgl-3 to protect germ cells from excessive germline apoptosis during normal oogenesis and development of the two gonadal arms. This may in part be through regulating the localization of sir-2.1 which is involved in germ cell apoptosis. May protect somatic cells from excessive apoptosis during normal development. Essential role in male and female postembryonic germline development; maternally provided protein maintains a population of proliferating germ cells and zygotic expression is required for correct oogenesis. The protein is Guanyl-specific ribonuclease pgl-1 of Caenorhabditis elegans.